Reading from the N-terminus, the 150-residue chain is Leukotriene C4 synthase (150 aa).

The Cytoplasmic portion of the chain corresponds to 1-6; that stretch reads MKDEVA. Residues 7–27 traverse the membrane as a helical segment; sequence LLATVTLLGVLLQAYFSLQVI. Over 28 to 48 the chain is Lumenal; it reads RARRAHRVSPPLTTGPPEFER. Arginine 30 provides a ligand contact to glutathione. The Proton donor role is filled by arginine 31. Serine 36 is subject to Phosphoserine. A helical transmembrane segment spans residues 49 to 69; that stretch reads VYRAQVNCSEYFPLFLATLWV. Glutathione is bound by residues 51-55 and 58-59; these read RAQVN and EY. Residues 70–73 are Cytoplasmic-facing; the sequence is AGVY. A helical membrane pass occupies residues 74–94; that stretch reads FHEGAAALCGLVYLFTRLRYF. 93-97 lines the glutathione pocket; sequence YFWGY. Over 95–104 the chain is Lumenal; that stretch reads WGYARSAQLR. The active-site Proton acceptor is arginine 104. The helical transmembrane segment at 105-124 threads the bilayer; sequence LAPLYASARALWLLLALATL. The Cytoplasmic portion of the chain corresponds to 125–150; the sequence is GLLAHFLPAAARAALLRLLRALLRTA.

Belongs to the MAPEG family. As to quaternary structure, homotrimer. Interacts with ALOX5AP and ALOX5. Post-translationally, phosphorylation at Ser-36 by RPS6KB1 inhibits the leukotriene-C4 synthase activity.

It is found in the nucleus outer membrane. It localises to the endoplasmic reticulum membrane. The protein localises to the nucleus membrane. The enzyme catalyses leukotriene C4 = leukotriene A4 + glutathione. The catalysed reaction is (13S,14S)-epoxy-(4Z,7Z,9E,11E,16Z,19Z)-docosahexaenoate + glutathione = (13R)-S-glutathionyl-(14S)-hydroxy-(4Z,7Z,9E,11E,16Z,19Z)-docosahexaenoate. It participates in lipid metabolism; leukotriene C4 biosynthesis. Its activity is regulated as follows. Inhibited by MK886. Catalyzes the conjugation of leukotriene A4 with reduced glutathione (GSH) to form leukotriene C4 with high specificity. Can also catalyze the transfer of a glutathionyl group from glutathione (GSH) to 13(S),14(S)-epoxy-docosahexaenoic acid to form maresin conjugate in tissue regeneration 1 (MCTR1), a bioactive lipid mediator that possess potent anti-inflammatory and proresolving actions. The chain is Leukotriene C4 synthase (LTC4S) from Cavia porcellus (Guinea pig).